Reading from the N-terminus, the 60-residue chain is Large ribosomal subunit protein bL32 (60 aa).

Residues 1–60 (MAVQQNKKSPSKRGMHRSHNALTVPGIAVEPTTGETHLRHHISPNGFYRGRQVLKNKSEA) are disordered. A compositionally biased stretch (basic residues) spans 9 to 19 (SPSKRGMHRSH).

Belongs to the bacterial ribosomal protein bL32 family.

In Paracidovorax citrulli (strain AAC00-1) (Acidovorax citrulli), this protein is Large ribosomal subunit protein bL32.